A 220-amino-acid chain; its full sequence is GTP cyclohydrolase 1 (220 aa).

Zn(2+)-binding residues include Cys-109, His-112, and Cys-180.

It belongs to the GTP cyclohydrolase I family. As to quaternary structure, toroid-shaped homodecamer, composed of two pentamers of five dimers.

It carries out the reaction GTP + H2O = 7,8-dihydroneopterin 3'-triphosphate + formate + H(+). It functions in the pathway cofactor biosynthesis; 7,8-dihydroneopterin triphosphate biosynthesis; 7,8-dihydroneopterin triphosphate from GTP: step 1/1. In Yersinia pseudotuberculosis serotype O:1b (strain IP 31758), this protein is GTP cyclohydrolase 1.